A 212-amino-acid polypeptide reads, in one-letter code: Thymidylate kinase (212 aa).

11–18 (GPEGAGKT) is a binding site for ATP.

It belongs to the thymidylate kinase family.

It catalyses the reaction dTMP + ATP = dTDP + ADP. Phosphorylation of dTMP to form dTDP in both de novo and salvage pathways of dTTP synthesis. The polypeptide is Thymidylate kinase (Streptococcus pneumoniae serotype 2 (strain D39 / NCTC 7466)).